The following is a 72-amino-acid chain: ADVPGNYPLDTRGYSYYCTILGENEFCKKICKVHGVSYGYCYNSGCWCEYLEAKDVSVWNAAKNYCKNPVGK.

One can recognise an LCN-type CS-alpha/beta domain in the interval 4–67 (PGNYPLDTRG…VWNAAKNYCK (64 aa)). 3 disulfide bridges follow: C18/C41, C27/C46, and C31/C48.

The protein belongs to the long (3 C-C) scorpion toxin superfamily. Sodium channel inhibitor family. Beta subfamily. Expressed by the venom gland.

It is found in the secreted. Functionally, binds to sodium channels (Nav) and affects the channel activation process. The chain is Toxin Acra II-3 from Androctonus crassicauda (Arabian fat-tailed scorpion).